A 417-amino-acid polypeptide reads, in one-letter code: RH-like protein (417 aa).

Transmembrane regions (helical) follow at residues 12–32 (CLPLWALTLEAALILLFFFFT), 44–64 (LVASYQVCQDLTVMAVLGLGF), 77–97 (VAFNLFLLALGVQWAILLDGF), 125–145 (ISMNAVLGKVNLAQLVVMELV), 172–192 (IHVFAAYFGLTVAWCLPKPLP), 203–223 (TSPSLFAMLGTLFLWMFWPTF), 238–258 (VFSTYYALAVSAVTAISVSSL), 265–285 (INMTYMPNAGLAGGVAVGASC), 287–307 (VIHSPWIAMVLGLVAGLISFG), 331–351 (TFGLPALLGEITYIVLMALRV), and 358–378 (MIGFQVLLSTGTLSLAMAMSI).

This sequence belongs to the ammonium transporter (TC 2.A.49) family. Rh subfamily.

It localises to the membrane. Functionally, may be part of an oligomeric complex which is likely to have a transport or channel function in the erythrocyte membrane. The protein is RH-like protein of Macaca fascicularis (Crab-eating macaque).